Consider the following 141-residue polypeptide: Large ribosomal subunit protein uL16 (141 aa).

This sequence belongs to the universal ribosomal protein uL16 family. As to quaternary structure, part of the 50S ribosomal subunit.

Binds 23S rRNA and is also seen to make contacts with the A and possibly P site tRNAs. In Deinococcus geothermalis (strain DSM 11300 / CIP 105573 / AG-3a), this protein is Large ribosomal subunit protein uL16.